Here is a 65-residue protein sequence, read N- to C-terminus: Large ribosomal subunit protein bL35 (65 aa).

The segment at 24 to 48 is disordered; sequence RRKAGKSHLLEHKSSDKKRSMSKTT. The segment covering 31 to 42 has biased composition (basic and acidic residues); that stretch reads HLLEHKSSDKKR.

Belongs to the bacterial ribosomal protein bL35 family.

The polypeptide is Large ribosomal subunit protein bL35 (Nostoc punctiforme (strain ATCC 29133 / PCC 73102)).